Reading from the N-terminus, the 1050-residue chain is Antibiotic efflux pump membrane transporter ArpB (1050 aa).

12 consecutive transmembrane segments (helical) span residues 10-30 (IFAW…ILKL), 339-359 (GVIH…YLFL), 370-390 (MTVP…GFSI), 393-413 (LTMF…IVVV), 440-460 (GALV…AFFG), 472-492 (ITIV…TPAL), 539-559 (VPFL…FARI), 871-891 (MPAL…ALYE), 893-913 (WSIP…ALIA), 923-943 (VYFL…AILI), 972-992 (IIMT…ASGA), and 1004-1024 (VIGG…LFFV).

It belongs to the resistance-nodulation-cell division (RND) (TC 2.A.6) family.

The protein localises to the cell inner membrane. In terms of biological role, the inner membrane transporter component of an antibiotic efflux pump. Confers resistance to numerous structurally unrelated antibiotics such as carbenicillin, chloramphenicol, erythromycin, novobiocin, streptomycin and tetracycline. Is not involved in organic solvent efflux. The sequence is that of Antibiotic efflux pump membrane transporter ArpB (arpB) from Pseudomonas putida (Arthrobacter siderocapsulatus).